We begin with the raw amino-acid sequence, 240 residues long: Uridylate kinase (240 aa).

Residue 12 to 15 (KISG) coordinates ATP. The interval 20–25 (GNQGFG) is involved in allosteric activation by GTP. Residue G54 participates in UMP binding. ATP contacts are provided by G55 and R59. UMP is bound by residues D74 and 135 to 142 (TGNPYFST). Y168 and D171 together coordinate ATP.

This sequence belongs to the UMP kinase family. In terms of assembly, homohexamer.

The protein localises to the cytoplasm. It catalyses the reaction UMP + ATP = UDP + ADP. It functions in the pathway pyrimidine metabolism; CTP biosynthesis via de novo pathway; UDP from UMP (UMPK route): step 1/1. With respect to regulation, allosterically activated by GTP. Inhibited by UTP. Catalyzes the reversible phosphorylation of UMP to UDP. This is Uridylate kinase from Moorella thermoacetica (strain ATCC 39073 / JCM 9320).